Here is a 632-residue protein sequence, read N- to C-terminus: Nucleoside triphosphatase I (632 aa).

The region spanning 42–204 is the Helicase ATP-binding domain; the sequence is FLGLDKMHSL…VMLVNLLRPK (163 aa). Position 55–62 (55–62) interacts with ATP; sequence HETGVGKT. Positions 141–144 match the DEXH box motif; it reads DECH. The Helicase C-terminal domain occupies 367–532; that stretch reads KFTDVCLRIL…EFTQLFKVFK (166 aa). The binding to the cap-specific mRNA (nucleoside-2'-O-)-methyltransferase stretch occupies residues 457–524; that stretch reads DIFILDMTWN…DIIRTKSKEF (68 aa).

This sequence belongs to the helicase family. NPH I subfamily. As to quaternary structure, monomer. Interacts (via C-terminus) with RAP94 (via N-terminus). Interacts with the cap-specific mRNA (nucleoside-2'-O-)-methyltransferase.

It is found in the virion. The catalysed reaction is a ribonucleoside 5'-triphosphate + H2O = a ribonucleoside 5'-diphosphate + phosphate + H(+). Functionally, DNA-dependent ATPase required for providing the needed energy to achieve the termination of early transcripts. Acts in concert with the RAP94 subunit of the virion RNA polymerase and the capping enzyme/VTF to catalyze release of UUUUUNU-containing nascent RNA from the elongation complex. NPH-I must bind ssDNA in order to exhibit ATPase activity. This chain is Nucleoside triphosphatase I (NPH1), found in Myxoma virus (strain Lausanne) (MYXV).